The sequence spans 330 residues: Aspartate--ammonia ligase (330 aa).

This sequence belongs to the class-II aminoacyl-tRNA synthetase family. AsnA subfamily.

The protein resides in the cytoplasm. The enzyme catalyses L-aspartate + NH4(+) + ATP = L-asparagine + AMP + diphosphate + H(+). It functions in the pathway amino-acid biosynthesis; L-asparagine biosynthesis; L-asparagine from L-aspartate (ammonia route): step 1/1. This Escherichia coli O8 (strain IAI1) protein is Aspartate--ammonia ligase.